The chain runs to 265 residues: uncharacterized protein (265 aa).

Glu47 provides a ligand contact to thiamine diphosphate. Residues 204-247 (QHQMWLVQHILRVARHCGFTVTTMEMTLIETQVRLKITVKSDRT) are thiamine pyrophosphate binding.

Belongs to the TPP enzyme family. It depends on Mg(2+) as a cofactor. Thiamine diphosphate is required as a cofactor.

In terms of biological role, truncated acetolactase synthase; no longer catalytically active. This is an uncharacterized protein from Haemophilus influenzae (strain ATCC 51907 / DSM 11121 / KW20 / Rd).